A 24-amino-acid polypeptide reads, in one-letter code: Brevinin-1BYb (24 aa).

Cysteine 18 and cysteine 24 form a disulfide bridge.

As to expression, expressed by the skin glands.

It localises to the secreted. Its function is as follows. Antibacterial activity against Gram-positive bacterium S.aureus and Gram-negative bacterium E.coli. Has moderate antifungal activity against C.albicans and strong hemolytic activity. The chain is Brevinin-1BYb from Rana boylii (Foothill yellow-legged frog).